The following is a 388-amino-acid chain: Translation initiation factor eIF2B subunit beta (388 aa).

A disordered region spans residues 109–133 (DDFETTTSNNNNNNNNNNINSSSNI). Residues 116 to 133 (SNNNNNNNNNNINSSSNI) are compositionally biased toward low complexity.

It belongs to the eIF-2B alpha/beta/delta subunits family. Component of the translation initiation factor 2B (eIF2B) complex which is a heterodecamer of two sets of five different subunits: alpha, beta, gamma, delta and epsilon. Subunits alpha, beta and delta comprise a regulatory subcomplex and subunits epsilon and gamma comprise a catalytic subcomplex. Within the complex, the hexameric regulatory complex resides at the center, with the two heterodimeric catalytic subcomplexes bound on opposite sides.

The protein localises to the cytoplasm. The protein resides in the cytosol. Functionally, acts as a component of the translation initiation factor 2B (eIF2B) complex, which catalyzes the exchange of GDP for GTP on eukaryotic initiation factor 2 (eIF2) gamma subunit. Its guanine nucleotide exchange factor activity is repressed when bound to eIF2 complex phosphorylated on the alpha subunit, thereby limiting the amount of methionyl-initiator methionine tRNA available to the ribosome and consequently global translation is repressed. This is Translation initiation factor eIF2B subunit beta (eif2b2) from Dictyostelium discoideum (Social amoeba).